The primary structure comprises 298 residues: ATP synthase gamma chain (298 aa).

Belongs to the ATPase gamma chain family. As to quaternary structure, F-type ATPases have 2 components, CF(1) - the catalytic core - and CF(0) - the membrane proton channel. CF(1) has five subunits: alpha(3), beta(3), gamma(1), delta(1), epsilon(1). CF(0) has three main subunits: a, b and c.

It is found in the cell inner membrane. Its function is as follows. Produces ATP from ADP in the presence of a proton gradient across the membrane. The gamma chain is believed to be important in regulating ATPase activity and the flow of protons through the CF(0) complex. The polypeptide is ATP synthase gamma chain (Wolinella succinogenes (strain ATCC 29543 / DSM 1740 / CCUG 13145 / JCM 31913 / LMG 7466 / NCTC 11488 / FDC 602W) (Vibrio succinogenes)).